The primary structure comprises 846 residues: Enhancer of polycomb-like protein 1 (846 aa).

Disordered stretches follow at residues 169 to 204, 391 to 466, 587 to 607, 682 to 702, and 759 to 804; these read FNSK…KGDA, TSDE…APDA, EKKR…QSPK, AADA…PQPN, and QVQA…GVKQ. Basic and acidic residues predominate over residues 180–203; sequence VKSDKEQGRGMRVKGKDREKEKGD. Residues 411 to 426 are compositionally biased toward polar residues; the sequence is PSLSGQTPLTSGQSSS. Positions 432 to 452 are enriched in basic and acidic residues; the sequence is TDKDREERAQRERYDAQRNAE. Residues 434–490 adopt a coiled-coil conformation; the sequence is KDREERAQRERYDAQRNAERSGILSGRSNAPDALKERLQALQQKTEEMLARKKEQDA. A compositionally biased stretch (pro residues) spans 686–702; it reads KPPPAPIFQKPPAPQPN. Low complexity predominate over residues 759–773; that stretch reads QVQAQGQGHPQAHLQ. The span at 783–796 shows a compositional bias: polar residues; that stretch reads NGVNSPMPNGQQML.

It belongs to the enhancer of polycomb family. In terms of assembly, component of the NuA4 histone acetyltransferase complex.

It is found in the nucleus. Functionally, component of the NuA4 histone acetyltransferase complex which is involved in transcriptional activation of selected genes principally by acetylation of nucleosomal histone H4 and H2A. The NuA4 complex is also involved in DNA repair. Involved in gene silencing by neighboring heterochromatin, blockage of the silencing spreading along the chromosome, and required for cell cycle progression through G2/M. The polypeptide is Enhancer of polycomb-like protein 1 (EPL1) (Cryptococcus neoformans var. neoformans serotype D (strain JEC21 / ATCC MYA-565) (Filobasidiella neoformans)).